Reading from the N-terminus, the 578-residue chain is Protein RIK (578 aa).

Positions 1–34 (MTEDNDEARVPLSDSSTTNDASRTRQRRKRKWDK) are disordered. Residues 206 to 273 (SSNVAARIRG…KSIDDAKRLA (68 aa)) form the KH domain. Polar residues predominate over residues 413–425 (ATSLSIPSDNASN). The disordered stretch occupies residues 413–578 (ATSLSIPSDN…DPDEPLTTRS (166 aa)). The segment covering 472 to 492 (PPSPRSVMPPPPPKTIAPPPS) has biased composition (pro residues). 2 stretches are compositionally biased toward low complexity: residues 493 to 503 (KTMSPPSSKSM) and 510 to 521 (SKTMSPLSSKSM). Over residues 560–572 (YGDDEDDDDDPDE) the composition is skewed to acidic residues.

Interacts with AS1. In terms of tissue distribution, expressed in vegetative tissues.

Its subcellular location is the nucleus. The sequence is that of Protein RIK (RIK) from Arabidopsis thaliana (Mouse-ear cress).